A 200-amino-acid polypeptide reads, in one-letter code: ATP synthase subunit b (200 aa).

The chain crosses the membrane as a helical span at residues 12–32 (ILSGLAVAVAILVPVLALASG).

This sequence belongs to the ATPase B chain family. As to quaternary structure, F-type ATPases have 2 components, F(1) - the catalytic core - and F(0) - the membrane proton channel. F(1) has five subunits: alpha(3), beta(3), gamma(1), delta(1), epsilon(1). F(0) has three main subunits: a(1), b(2) and c(10-14). The alpha and beta chains form an alternating ring which encloses part of the gamma chain. F(1) is attached to F(0) by a central stalk formed by the gamma and epsilon chains, while a peripheral stalk is formed by the delta and b chains.

The protein resides in the cell inner membrane. In terms of biological role, f(1)F(0) ATP synthase produces ATP from ADP in the presence of a proton or sodium gradient. F-type ATPases consist of two structural domains, F(1) containing the extramembraneous catalytic core and F(0) containing the membrane proton channel, linked together by a central stalk and a peripheral stalk. During catalysis, ATP synthesis in the catalytic domain of F(1) is coupled via a rotary mechanism of the central stalk subunits to proton translocation. Functionally, component of the F(0) channel, it forms part of the peripheral stalk, linking F(1) to F(0). In Trichlorobacter lovleyi (strain ATCC BAA-1151 / DSM 17278 / SZ) (Geobacter lovleyi), this protein is ATP synthase subunit b.